The following is a 608-amino-acid chain: 2',5'-phosphodiesterase 12 (608 aa).

The N-terminal 16 residues, 1 to 16 (MWRLPGRAALRGVRSV), are a transit peptide targeting the mitochondrion. The interval 91-111 (AKKSRKNRAHSSGGAACAATG) is disordered. The segment covering 100–111 (HSSGGAACAATG) has biased composition (low complexity). Ser216 carries the post-translational modification Phosphoserine. Positions 350, 495, and 497 each coordinate Mg(2+). The active-site Proton donor/acceptor is the Asp495.

This sequence belongs to the CCR4/nocturin family. The cofactor is Mg(2+).

Its subcellular location is the mitochondrion matrix. The catalysed reaction is Exonucleolytic cleavage of poly(A) to 5'-AMP.. Enzyme that cleaves 2',5'-phosphodiester bond linking adenosines of the 5'-triphosphorylated oligoadenylates, triphosphorylated oligoadenylates referred as 2-5A modulates the 2-5A system. Degrades triphosphorylated 2-5A to produce AMP and ATP. Also cleaves 3',5'-phosphodiester bond of oligoadenylates. Plays a role as a negative regulator of the 2-5A system that is one of the major pathways for antiviral and antitumor functions induced by interferons (IFNs). Suppression of this enzyme increases cellular 2-5A levels and decreases viral replication in cultured small-airway epithelial cells. This Rattus norvegicus (Rat) protein is 2',5'-phosphodiesterase 12 (Pde12).